The primary structure comprises 507 residues: ATP synthase subunit alpha (507 aa).

169–176 (GDRQTGKT) contributes to the ATP binding site.

The protein belongs to the ATPase alpha/beta chains family. In terms of assembly, F-type ATPases have 2 components, CF(1) - the catalytic core - and CF(0) - the membrane proton channel. CF(1) has five subunits: alpha(3), beta(3), gamma(1), delta(1), epsilon(1). CF(0) has three main subunits: a(1), b(2) and c(9-12). The alpha and beta chains form an alternating ring which encloses part of the gamma chain. CF(1) is attached to CF(0) by a central stalk formed by the gamma and epsilon chains, while a peripheral stalk is formed by the delta and b chains.

It localises to the cell membrane. It carries out the reaction ATP + H2O + 4 H(+)(in) = ADP + phosphate + 5 H(+)(out). Produces ATP from ADP in the presence of a proton gradient across the membrane. The alpha chain is a regulatory subunit. This Desulforudis audaxviator (strain MP104C) protein is ATP synthase subunit alpha.